We begin with the raw amino-acid sequence, 209 residues long: N-(5'-phosphoribosyl)anthranilate isomerase (209 aa).

It belongs to the TrpF family.

The enzyme catalyses N-(5-phospho-beta-D-ribosyl)anthranilate = 1-(2-carboxyphenylamino)-1-deoxy-D-ribulose 5-phosphate. It functions in the pathway amino-acid biosynthesis; L-tryptophan biosynthesis; L-tryptophan from chorismate: step 3/5. This chain is N-(5'-phosphoribosyl)anthranilate isomerase, found in Granulibacter bethesdensis (strain ATCC BAA-1260 / CGDNIH1).